The primary structure comprises 394 residues: Phosphopentomutase (394 aa).

Asp-14, Asp-287, His-292, Asp-328, His-329, and His-340 together coordinate Mn(2+).

This sequence belongs to the phosphopentomutase family. The cofactor is Mn(2+).

The protein resides in the cytoplasm. The catalysed reaction is 2-deoxy-alpha-D-ribose 1-phosphate = 2-deoxy-D-ribose 5-phosphate. It carries out the reaction alpha-D-ribose 1-phosphate = D-ribose 5-phosphate. The protein operates within carbohydrate degradation; 2-deoxy-D-ribose 1-phosphate degradation; D-glyceraldehyde 3-phosphate and acetaldehyde from 2-deoxy-alpha-D-ribose 1-phosphate: step 1/2. Its function is as follows. Isomerase that catalyzes the conversion of deoxy-ribose 1-phosphate (dRib-1-P) and ribose 1-phosphate (Rib-1-P) to deoxy-ribose 5-phosphate (dRib-5-P) and ribose 5-phosphate (Rib-5-P), respectively. The polypeptide is Phosphopentomutase (Listeria innocua serovar 6a (strain ATCC BAA-680 / CLIP 11262)).